The sequence spans 395 residues: uncharacterized protein (395 aa).

The interval 115 to 144 (TKPPTEGGPEKDQSSPSQTQAAPQGPSTAS) is disordered. The segment covering 128–141 (SSPSQTQAAPQGPS) has biased composition (low complexity).

This is an uncharacterized protein from Homo sapiens (Human).